A 240-amino-acid polypeptide reads, in one-letter code: UDP-2,3-diacylglucosamine hydrolase (240 aa).

5 residues coordinate Mn(2+): aspartate 8, histidine 10, aspartate 41, asparagine 79, and histidine 114. 79–80 (NR) contacts substrate. Aspartate 122, serine 160, asparagine 164, lysine 167, and histidine 195 together coordinate substrate. Residues histidine 195 and histidine 197 each contribute to the Mn(2+) site.

This sequence belongs to the LpxH family. The cofactor is Mn(2+).

The protein localises to the cell inner membrane. The catalysed reaction is UDP-2-N,3-O-bis[(3R)-3-hydroxytetradecanoyl]-alpha-D-glucosamine + H2O = 2-N,3-O-bis[(3R)-3-hydroxytetradecanoyl]-alpha-D-glucosaminyl 1-phosphate + UMP + 2 H(+). The protein operates within glycolipid biosynthesis; lipid IV(A) biosynthesis; lipid IV(A) from (3R)-3-hydroxytetradecanoyl-[acyl-carrier-protein] and UDP-N-acetyl-alpha-D-glucosamine: step 4/6. Hydrolyzes the pyrophosphate bond of UDP-2,3-diacylglucosamine to yield 2,3-diacylglucosamine 1-phosphate (lipid X) and UMP by catalyzing the attack of water at the alpha-P atom. Involved in the biosynthesis of lipid A, a phosphorylated glycolipid that anchors the lipopolysaccharide to the outer membrane of the cell. The protein is UDP-2,3-diacylglucosamine hydrolase of Salmonella schwarzengrund (strain CVM19633).